A 557-amino-acid polypeptide reads, in one-letter code: Formate--tetrahydrofolate ligase (557 aa).

66–73 (TPAGEGKT) contributes to the ATP binding site.

The protein belongs to the formate--tetrahydrofolate ligase family.

It carries out the reaction (6S)-5,6,7,8-tetrahydrofolate + formate + ATP = (6R)-10-formyltetrahydrofolate + ADP + phosphate. It functions in the pathway one-carbon metabolism; tetrahydrofolate interconversion. This Bartonella tribocorum (strain CIP 105476 / IBS 506) protein is Formate--tetrahydrofolate ligase.